The primary structure comprises 221 residues: Ras-related protein Rab-27A (221 aa).

Position 2 is an N-acetylserine (S2). At S2 the chain carries Phosphoserine. G16–S24 serves as a coordination point for GTP. The Effector region signature appears at F38–F46. GTP contacts are provided by residues D74–Q78, N133–D136, and S163–A165. Cysteines 123 and 188 form a disulfide. S-geranylgeranyl cysteine attachment occurs at residues C219 and C221. C221 is subject to Cysteine methyl ester.

Belongs to the small GTPase superfamily. Rab family. Binds SYTL1, SYTL2, SLAC2B, MYRIP, SYTL3, SYTL4, SYTL5 and MLPH. Interacts with UNC13D. Interacts with RPH3A and RPH3A. Does not interact with the BLOC-3 complex (heterodimer of HPS1 and HPS4). Interacts (GDP-bound form preferentially) with DENND10. In terms of tissue distribution, detected in melanocytes. Expressed abundantly in the stomach and is predominantly localized at the apical region of gastric-surface mucus cells. Also expressed in the thymus and lung.

It is found in the membrane. It localises to the melanosome. The protein localises to the late endosome. The protein resides in the lysosome. The enzyme catalyses GTP + H2O = GDP + phosphate + H(+). Regulated by guanine nucleotide exchange factors (GEFs) which promote the exchange of bound GDP for free GTP, GTPase activating proteins (GAPs) which increase the GTP hydrolysis activity, and GDP dissociation inhibitors which inhibit the dissociation of the nucleotide from the GTPase. Activated by GEFs such as DENND10. Its function is as follows. Small GTPase which cycles between active GTP-bound and inactive GDP-bound states. In its active state, binds to a variety of effector proteins to regulate homeostasis of late endocytic pathway, including endosomal positioning, maturation and secretion. Plays a role in cytotoxic granule exocytosis in lymphocytes. Required for both granule maturation and granule docking and priming at the immunologic synapse. The protein is Ras-related protein Rab-27A (Rab27a) of Mus musculus (Mouse).